The sequence spans 1500 residues: Carbamoyl-phosphate synthase [ammonia], mitochondrial (1500 aa).

A mitochondrion-targeting transit peptide spans 1-38 (MTRILTAFKVVRTLKTGFGFTNVTAHQKWKFSRPGIRL). An anthranilate phosphoribosyltransferase homolog region spans residues 39–218 (LSVKAQTAHI…VKVYGKGNPT (180 aa)). An N6-acetyllysine; alternate mark is found at Lys55, Lys57, and Lys119. Lys55 carries the post-translational modification N6-glutaryllysine; alternate. An N6-succinyllysine; alternate mark is found at Lys55, Lys57, and Lys119. Residue Ser148 is modified to Phosphoserine. Lys157 and Lys171 each carry N6-acetyllysine; alternate. Lys157 carries the N6-succinyllysine; alternate modification. Lys171 is subject to N6-glutaryllysine; alternate. Lys176 carries the N6-glutaryllysine modification. N6-acetyllysine is present on residues Lys182 and Lys197. N6-acetyllysine; alternate occurs at positions 207, 210, 214, 219, and 228. 5 positions are modified to N6-glutaryllysine; alternate: Lys207, Lys210, Lys214, Lys219, and Lys228. Position 207 is an N6-succinyllysine; alternate (Lys207). The residue at position 214 (Lys214) is an N6-succinyllysine; alternate. The Glutamine amidotransferase type-1 domain occupies 219 to 404 (KVVAVDCGIK…FSLIKKGKAT (186 aa)). At Lys237 the chain carries N6-glutaryllysine. 4 positions are modified to N6-acetyllysine; alternate: Lys280, Lys287, Lys307, and Lys310. The residue at position 280 (Lys280) is an N6-glutaryllysine; alternate. Lys287 and Lys307 each carry N6-succinyllysine; alternate. Residues Lys307 and Lys310 each carry the N6-glutaryllysine; alternate modification. Lys400 bears the N6-succinyllysine mark. Lys402, Lys412, Lys453, and Lys458 each carry N6-glutaryllysine; alternate. 2 positions are modified to N6-succinyllysine; alternate: Lys402 and Lys412. Residues Lys412, Lys453, Lys458, Lys522, Lys527, and Lys532 each carry the N6-acetyllysine; alternate modification. N6-succinyllysine; alternate occurs at positions 458, 522, and 527. N6-glutaryllysine; alternate is present on residues Lys527 and Lys532. Residue Ser537 is modified to Phosphoserine; alternate. An O-linked (GlcNAc) serine; alternate glycan is attached at Ser537. Residue Ser540 is modified to Phosphoserine. Residues 551-743 (SDKLNEINEK…LAFIAAKIAL (193 aa)) enclose the ATP-grasp 1 domain. N6-acetyllysine; alternate occurs at positions 553 and 560. Position 553 is an N6-glutaryllysine; alternate (Lys553). An N6-succinyllysine; alternate mark is found at Lys553 and Lys560. Ser569 is modified (phosphoserine). N6-acetyllysine; alternate occurs at positions 575 and 612. N6-succinyllysine; alternate is present on residues Lys575 and Lys612. At Lys630 the chain carries N6-acetyllysine. Position 728 is an N6-glutaryllysine (Lys728). N6-acetyllysine; alternate is present on residues Lys751, Lys757, Lys772, Lys793, Lys811, and Lys831. Residues Lys751 and Lys757 each carry the N6-succinyllysine; alternate modification. Residues Lys757, Lys772, Lys793, and Lys811 each carry the N6-glutaryllysine; alternate modification. Lys793 carries the N6-succinyllysine; alternate modification. Lys831 carries the post-translational modification N6-succinyllysine; alternate. Ser835 carries the phosphoserine modification. An N6-acetyllysine; alternate mark is found at Lys841 and Lys856. N6-glutaryllysine; alternate is present on residues Lys841 and Lys856. N6-glutaryllysine is present on Lys869. Residues Lys875, Lys889, and Lys892 each carry the N6-acetyllysine; alternate modification. Residues Lys875, Lys889, and Lys892 each carry the N6-glutaryllysine; alternate modification. An N6-succinyllysine; alternate mark is found at Lys875, Lys889, and Lys892. Phosphoserine occurs at positions 896 and 898. Lys905 carries the N6-glutaryllysine modification. An N6-acetyllysine; alternate mark is found at Lys908, Lys915, and Lys919. An N6-glutaryllysine; alternate mark is found at Lys908, Lys915, and Lys919. An N6-succinyllysine; alternate mark is found at Lys915 and Lys919. The residue at position 935 (Lys935) is an N6-acetyllysine. At Ser1036 the chain carries Phosphoserine. An N6-acetyllysine; alternate modification is found at Lys1074. Position 1074 is an N6-glutaryllysine; alternate (Lys1074). Lys1074 carries the post-translational modification N6-succinyllysine; alternate. Phosphoserine is present on residues Ser1079, Ser1090, and Ser1093. The ATP-grasp 2 domain maps to 1093–1284 (SAVLDELKVA…FIDVATKVMI (192 aa)). Lys1100 is subject to N6-acetyllysine; alternate. Lys1100 bears the N6-succinyllysine; alternate mark. Lys1149 carries the post-translational modification N6-succinyllysine. Lys1150 carries the post-translational modification N6-glutaryllysine. N6-acetyllysine; alternate occurs at positions 1168 and 1183. N6-glutaryllysine; alternate occurs at positions 1168 and 1183. An N6-succinyllysine; alternate mark is found at Lys1168 and Lys1183. Ser1203 is modified (phosphoserine). Lys1222 is modified (N6-acetyllysine). The residue at position 1224 (Lys1224) is an N6-glutaryllysine. N6-acetyllysine; alternate is present on residues Lys1232, Lys1269, and Lys1291. Residues Lys1232, Lys1269, and Lys1291 each carry the N6-succinyllysine; alternate modification. The O-linked (GlcNAc) serine glycan is linked to Ser1331. O-linked (GlcNAc) threonine glycosylation occurs at Thr1332. One can recognise an MGS-like domain in the interval 1355–1500 (FKIPQKGILI…YRQYSAGKAA (146 aa)). Lys1356 is subject to N6-acetyllysine; alternate. Lys1356 and Lys1360 each carry N6-glutaryllysine; alternate. 2 positions are modified to N6-succinyllysine; alternate: Lys1356 and Lys1360. 3 residues coordinate N-acetyl-L-glutamate: Thr1391, Thr1394, and Trp1410. Phosphoserine is present on residues Ser1419 and Ser1431. Positions 1437 and 1440 each coordinate N-acetyl-L-glutamate. At Lys1444 the chain carries N6-acetyllysine; alternate. Position 1444 is an N6-succinyllysine; alternate (Lys1444). N-acetyl-L-glutamate is bound at residue Asn1449. Residues Lys1471, Lys1479, and Lys1486 each carry the N6-acetyllysine; alternate modification. N6-succinyllysine; alternate occurs at positions 1471, 1479, and 1486. N6-glutaryllysine; alternate occurs at positions 1479 and 1486.

Can form homooligomers (monomers as predominant form and dimers). In terms of processing, undergoes proteolytic cleavage in the C-terminal region corresponding to the loss of approximately 12 AA residues from the C-terminus. Post-translationally, succinylated at Lys-287 and Lys-1291. Desuccinylated at Lys-1291 by SIRT5, leading to activation. Glutarylated. Glutarylation levels increase during fasting. Deglutarylated by SIRT5 at Lys-55, Lys-219, Lys-412, Lys-889, Lys-892, Lys-915, Lys-1360 and Lys-1486, leading to activation. In terms of tissue distribution, primarily in the liver and small intestine.

It localises to the mitochondrion. The protein resides in the nucleus. Its subcellular location is the nucleolus. It is found in the cell membrane. The catalysed reaction is hydrogencarbonate + NH4(+) + 2 ATP = carbamoyl phosphate + 2 ADP + phosphate + 2 H(+). Its activity is regulated as follows. Requires N-acetyl-L-glutamate (NAG) as an allosteric activator. Activated by glycerol in the absence of NAG, whereas in the presence of NAG it is inhibited by increasing concentrations of glycerol. Its function is as follows. Involved in the urea cycle of ureotelic animals where the enzyme plays an important role in removing excess ammonia from the cell. The chain is Carbamoyl-phosphate synthase [ammonia], mitochondrial (CPS1) from Homo sapiens (Human).